Here is a 252-residue protein sequence, read N- to C-terminus: UPF0246 protein AM1_4276 (252 aa).

The protein belongs to the UPF0246 family.

This chain is UPF0246 protein AM1_4276, found in Acaryochloris marina (strain MBIC 11017).